The primary structure comprises 114 residues: MRRWLLKSKLHRARVTGTEKDYEGSISIDAALLSEADIAVGEQVQVVNVTNGERFETYTIEGESRQMELNGAAARLAETGDVIIVISYGLYVKDEQPEPTVLLLDEENRISERE.

Residue S25 is the Schiff-base intermediate with substrate; via pyruvic acid of the active site. The residue at position 25 (S25) is a Pyruvic acid (Ser). T57 contacts substrate. Catalysis depends on Y58, which acts as the Proton donor. 71 to 73 contacts substrate; it reads GAA.

The protein belongs to the PanD family. In terms of assembly, heterooctamer of four alpha and four beta subunits. Pyruvate serves as cofactor. Is synthesized initially as an inactive proenzyme, which is activated by self-cleavage at a specific serine bond to produce a beta-subunit with a hydroxyl group at its C-terminus and an alpha-subunit with a pyruvoyl group at its N-terminus.

Its subcellular location is the cytoplasm. The catalysed reaction is L-aspartate + H(+) = beta-alanine + CO2. It participates in cofactor biosynthesis; (R)-pantothenate biosynthesis; beta-alanine from L-aspartate: step 1/1. Catalyzes the pyruvoyl-dependent decarboxylation of aspartate to produce beta-alanine. The chain is Aspartate 1-decarboxylase from Haloquadratum walsbyi (strain DSM 16790 / HBSQ001).